The sequence spans 320 residues: Cytochrome f (320 aa).

A signal peptide spans 1–35 (MQTINTFSWIKEQITRSISISLILYIITRSSIANA). Residues Tyr-36, Cys-56, Cys-59, and His-60 each contribute to the heme site. The helical transmembrane segment at 286–305 (IQGLLFFFASVILAQIFLVL) threads the bilayer.

The protein belongs to the cytochrome f family. As to quaternary structure, the 4 large subunits of the cytochrome b6-f complex are cytochrome b6, subunit IV (17 kDa polypeptide, petD), cytochrome f and the Rieske protein, while the 4 small subunits are PetG, PetL, PetM and PetN. The complex functions as a dimer. Heme is required as a cofactor.

It localises to the plastid. Its subcellular location is the chloroplast thylakoid membrane. In terms of biological role, component of the cytochrome b6-f complex, which mediates electron transfer between photosystem II (PSII) and photosystem I (PSI), cyclic electron flow around PSI, and state transitions. This Spinacia oleracea (Spinach) protein is Cytochrome f (petA).